Here is a 155-residue protein sequence, read N- to C-terminus: Small ribosomal subunit protein uS7 (155 aa).

Belongs to the universal ribosomal protein uS7 family. In terms of assembly, part of the 30S ribosomal subunit. Contacts proteins S9 and S11.

Functionally, one of the primary rRNA binding proteins, it binds directly to 16S rRNA where it nucleates assembly of the head domain of the 30S subunit. Is located at the subunit interface close to the decoding center, probably blocks exit of the E-site tRNA. In Helicobacter acinonychis (strain Sheeba), this protein is Small ribosomal subunit protein uS7.